A 914-amino-acid chain; its full sequence is Protein ECT2 (914 aa).

At Ala-2 the chain carries N-acetylalanine. 2 BRCT domains span residues 171–260 (LYCT…AAVD) and 266–354 (FKVP…MYLY). Thr-359 carries the post-translational modification Phosphothreonine; by PKC/PRKCI. Ser-367 and Ser-370 each carry phosphoserine. Residue Thr-373 is modified to Phosphothreonine; by CDK1. Phosphoserine is present on Ser-376. 2 short sequence motifs (nuclear localization signal) span residues 378–382 (RKRRR) and 401–405 (PRKRP). Positions 388–449 (AQLSRETDVS…SKSSTPVPSK (62 aa)) are disordered. A compositionally biased stretch (polar residues) spans 418–429 (DISNTPESSINY). Over residues 432–449 (TPKSCTKSSKSSTPVPSK) the composition is skewed to low complexity. Thr-444 carries the post-translational modification Phosphothreonine; by CDK1. The region spanning 452–641 (ARWQVAKELY…KEVMTHINED (190 aa)) is the DH domain. Residue Lys-611 forms a Glycyl lysine isopeptide (Lys-Gly) (interchain with G-Cter in SUMO2) linkage. One can recognise a PH domain in the interval 675–794 (RVETISLGEH…KMLCRHVANT (120 aa)). Phosphoserine occurs at positions 716 and 842. Position 846 is a phosphothreonine; by CDK1 (Thr-846). The segment at 857 to 884 (TSHGSVEGRSPSSNDKHVMSRLSSTSSL) is disordered. Phosphoserine occurs at positions 861 and 866.

In terms of assembly, homodimer. Homooligomer. Found in the centralspindlin complex. Interacts with NR1I3. Interacts (Thr-359 phosphorylated form) with PARD6A; the interaction is observed in cancer cells. Interacts (Thr-359 phosphorylated form) with PRKCI; the interaction is observed in cancer cells. Interacts with PKP4; the interaction is observed at the midbody. Interacts with RACGAP1/CYK4; the interaction is direct, occurs in a microtubule-dependent manner, occurs at anaphase and during cytokinesis, is inhibited in metaphase by phosphorylation of ECT2 on Thr-373 and is stimulated in early anaphase by dephosphorylation of ECT2 probably on Thr-373 through CDK1 activity. Interacts with PLK1; the interaction is stimulated upon its phosphorylation on Thr-444. Interacts with RHOA; the interaction results in allosteric activation of ECT2. Interacts with KIF23, PARD3, PARD6B and PRKCQ. Interacts with NEDD9/HEF1. Phosphorylated by PLK1 in vitro. Hyperphosphorylated during the G2 phase of the cell cycle. Phosphorylation at Thr-373 occurs during the G2/M phase, relieves its auto-inhibition status and stimulates its GEF activity. Phosphorylation at Thr-444 in G2/M phase is required for subsequent binding with PLK1 and Rho exchange activation. Dephosphorylated at the time of cytokinesis. Phosphorylation at Thr-359 is required for its transformation activity in cancer cells. As to expression, expressed in lung epithelial cells (at protein level). Expressed in squamous cell carcinoma, primary non-small cell lung cancer tumors and lung adenocarcinoma.

The protein localises to the nucleus. Its subcellular location is the cytoplasm. It is found in the cytoskeleton. It localises to the spindle. The protein resides in the cleavage furrow. The protein localises to the midbody. Its subcellular location is the cell junction. It is found in the tight junction. It localises to the microtubule organizing center. The protein resides in the centrosome. Its activity is regulated as follows. Autoinhibited by the C-terminal PH domain which folds back and binds to the surface of the DH domain, blocking binding of RHOA to the catalytic center of the DH domain. The 2nd BRCT domain is also involved in inhibition, probably by helping to impede RHOA binding. Allosterically activated by binding of activated GTP-bound RHOA to the PH domain which stimulates the release of PH inhibition and promotes the binding of substrate RHOA to the catalytic center. Binding of phosphorylated RACGAP1 to the N-terminal BRCT domain-containing region also releases autoinhibition. Guanine nucleotide exchange factor (GEF) that catalyzes the exchange of GDP for GTP. Promotes guanine nucleotide exchange on the Rho family members of small GTPases, like RHOA, RHOC, RAC1 and CDC42. Required for signal transduction pathways involved in the regulation of cytokinesis. Component of the centralspindlin complex that serves as a microtubule-dependent and Rho-mediated signaling required for the myosin contractile ring formation during the cell cycle cytokinesis. Regulates the translocation of RHOA from the central spindle to the equatorial region. Plays a role in the control of mitotic spindle assembly; regulates the activation of CDC42 in metaphase for the process of spindle fibers attachment to kinetochores before chromosome congression. Involved in the regulation of epithelial cell polarity; participates in the formation of epithelial tight junctions in a polarity complex PARD3-PARD6-protein kinase PRKCQ-dependent manner. Plays a role in the regulation of neurite outgrowth. Inhibits phenobarbital (PB)-induced NR1I3 nuclear translocation. Stimulates the activity of RAC1 through its association with the oncogenic PARD6A-PRKCI complex in cancer cells, thereby acting to coordinately drive tumor cell proliferation and invasion. Also stimulates genotoxic stress-induced RHOB activity in breast cancer cells leading to their cell death. The sequence is that of Protein ECT2 from Homo sapiens (Human).